The following is a 100-amino-acid chain: Vesicle-associated membrane protein 8 (100 aa).

Met1 carries the N-acetylmethionine modification. The Cytoplasmic segment spans residues 1-75 (MEEASEGGGN…ARKFWWKNVK (75 aa)). Phosphoserine occurs at positions 5 and 18. One can recognise a v-SNARE coiled-coil homology domain in the interval 12–72 (RVRNLQSEVE…QKVARKFWWK (61 aa)). Phosphothreonine occurs at positions 28, 48, and 54. A Phosphoserine modification is found at Ser55. Residues Lys64 and Lys68 are each lipidated ((Microbial infection) N6-stearoyl lysine). Residues 76–96 (MIVLICVIVFIIILFIVLFAT) form a helical; Anchor for type IV membrane protein membrane-spanning segment. The Vesicular portion of the chain corresponds to 97 to 100 (GAFS).

Belongs to the synaptobrevin family. Forms a SNARE complex composed of VAMP8, SNAP29 and STX17 involved in fusion of autophagosome with lysosome. Found in a number of SNARE complexes with NAPA, SNAP23, SNAP25, STX1A, STX4, STX7, STX8 and VTI1B. Interacts with PICALM. SNARE complex formation and binding by PICALM are mutually exclusive processes for VAMP8. Interacts with SBF2/MTMR13. Interacts with RAB21 (in GTP-bound form) in response to starvation; the interaction probably regulates VAMP8 endolysosomal trafficking. Interacts with STX17; this interaction is increased in the absence of TMEM39A. Interacts with TRIM6. As to quaternary structure, (Microbial infection) The interaction with STX17 is decreased in presence of SARS coronavirus-2/SARS-CoV-2 ORF3A protein. Post-translationally, (Microbial infection) Stearoylated By S.flexneri N-epsilon-fatty acyltransferase IcsB, thereby disrupting the host actin cytoskeleton. In terms of tissue distribution, platelets.

Its subcellular location is the lysosome membrane. It is found in the early endosome membrane. It localises to the late endosome membrane. The protein localises to the cell membrane. The protein resides in the zymogen granule membrane. Its function is as follows. SNAREs, soluble N-ethylmaleimide-sensitive factor-attachment protein receptors, are essential proteins for fusion of cellular membranes. SNAREs localized on opposing membranes assemble to form a trans-SNARE complex, an extended, parallel four alpha-helical bundle that drives membrane fusion. VAMP8 is a SNARE involved in autophagy through the direct control of autophagosome membrane fusion with the lysososome membrane via its interaction with the STX17-SNAP29 binary t-SNARE complex. Also required for dense-granule secretion in platelets. Also plays a role in regulated enzyme secretion in pancreatic acinar cells. Involved in the abscission of the midbody during cell division, which leads to completely separate daughter cells. Involved in the homotypic fusion of early and late endosomes. Also participates in the activation of type I interferon antiviral response through a TRIM6-dependent mechanism. The chain is Vesicle-associated membrane protein 8 from Homo sapiens (Human).